Here is a 148-residue protein sequence, read N- to C-terminus: uncharacterized protein (148 aa).

Disordered stretches follow at residues M1–P86 and R122–C148. Over residues R38–P57 the composition is skewed to basic residues. A compositionally biased stretch (polar residues) spans Q134–C148.

Belongs to the Epstein-Barr virus BLLF2 family.

This is an uncharacterized protein from Homo sapiens (Human).